The following is a 114-amino-acid chain: uncharacterized protein (114 aa).

Basic residues predominate over residues 18-29 (TRKRNSHKKVTK). Disordered stretches follow at residues 18–47 (TRKR…RRTG) and 65–108 (SRPR…KLLN). Residues 30–41 (RAVEKRKQDSTR) are compositionally biased toward basic and acidic residues.

This is an uncharacterized protein from Homo sapiens (Human).